We begin with the raw amino-acid sequence, 300 residues long: Protoheme IX farnesyltransferase (300 aa).

Helical transmembrane passes span 20–40, 49–69, 97–117, 122–142, 145–165, 176–196, 217–237, 242–262, and 278–298; these read ITKAGLAISVLFSSIAGYLLG, WSVLIVLAIGGYCMVGASNAY, VTALIVASLLTIIGIVLLYTI, AMFAAISIFLYTSIYTPLKTV, LSVFVGAFPGAIPFMLGWVAA, LFLIQFFWQFPHFWSIGWFLY, ALQVILYTIWLIIASLLPVLG, LFISPVAAVLVFLLGLWMLFY, and LMLVSVSYISLLQIVFIVDKF.

The protein belongs to the UbiA prenyltransferase family. Protoheme IX farnesyltransferase subfamily.

The protein resides in the cell inner membrane. It catalyses the reaction heme b + (2E,6E)-farnesyl diphosphate + H2O = Fe(II)-heme o + diphosphate. Its pathway is porphyrin-containing compound metabolism; heme O biosynthesis; heme O from protoheme: step 1/1. In terms of biological role, converts heme B (protoheme IX) to heme O by substitution of the vinyl group on carbon 2 of heme B porphyrin ring with a hydroxyethyl farnesyl side group. In Flavobacterium johnsoniae (strain ATCC 17061 / DSM 2064 / JCM 8514 / BCRC 14874 / CCUG 350202 / NBRC 14942 / NCIMB 11054 / UW101) (Cytophaga johnsonae), this protein is Protoheme IX farnesyltransferase.